The chain runs to 325 residues: Transcription initiation factor IIB (325 aa).

The TFIIB-type zinc finger occupies 19-52 (NKLWCMVCRIQDPDIIEDYAKGDLICRGCGVVVG). Zn(2+) contacts are provided by cysteine 23, cysteine 26, cysteine 44, and cysteine 47. Repeat copies occupy residues 131-207 (MADH…IMKE) and 227-303 (FCST…DLYA).

The protein belongs to the TFIIB family.

It localises to the nucleus. In terms of biological role, general transcription factor that plays a role in transcription initiation by RNA polymerase II (Pol II). Involved in the pre-initiation complex (PIC) formation and Pol II recruitment at promoter DNA. This Dictyostelium discoideum (Social amoeba) protein is Transcription initiation factor IIB (gtf2b).